The primary structure comprises 144 residues: Large ribosomal subunit protein uL16 (144 aa).

It belongs to the universal ribosomal protein uL16 family. Part of the 50S ribosomal subunit.

Binds 23S rRNA and is also seen to make contacts with the A and possibly P site tRNAs. The polypeptide is Large ribosomal subunit protein uL16 (Enterococcus faecalis (strain ATCC 700802 / V583)).